A 56-amino-acid chain; its full sequence is Small ribosomal subunit protein uS14B (56 aa).

Zn(2+)-binding residues include cysteine 21 and cysteine 24. Serine 25 carries the post-translational modification Phosphoserine. Positions 39 and 42 each coordinate Zn(2+).

It belongs to the universal ribosomal protein uS14 family. Component of the small ribosomal subunit (SSU). Mature yeast ribosomes consist of a small (40S) and a large (60S) subunit. The 40S small subunit contains 1 molecule of ribosomal RNA (18S rRNA) and 33 different proteins (encoded by 57 genes). The large 60S subunit contains 3 rRNA molecules (25S, 5.8S and 5S rRNA) and 46 different proteins (encoded by 81 genes). Requires Zn(2+) as cofactor.

It localises to the cytoplasm. Component of the ribosome, a large ribonucleoprotein complex responsible for the synthesis of proteins in the cell. The small ribosomal subunit (SSU) binds messenger RNAs (mRNAs) and translates the encoded message by selecting cognate aminoacyl-transfer RNA (tRNA) molecules. The large subunit (LSU) contains the ribosomal catalytic site termed the peptidyl transferase center (PTC), which catalyzes the formation of peptide bonds, thereby polymerizing the amino acids delivered by tRNAs into a polypeptide chain. The nascent polypeptides leave the ribosome through a tunnel in the LSU and interact with protein factors that function in enzymatic processing, targeting, and the membrane insertion of nascent chains at the exit of the ribosomal tunnel. In Saccharomyces cerevisiae (strain ATCC 204508 / S288c) (Baker's yeast), this protein is Small ribosomal subunit protein uS14B.